The following is a 461-amino-acid chain: Cysteine--tRNA ligase (461 aa).

Zn(2+) is bound at residue cysteine 28. The 'HIGH' region signature appears at methionine 30–histidine 40. Zn(2+) contacts are provided by cysteine 212, histidine 237, and glutamate 241. The 'KMSKS' region signature appears at lysine 269–serine 273. Lysine 272 is an ATP binding site.

Belongs to the class-I aminoacyl-tRNA synthetase family. In terms of assembly, monomer. The cofactor is Zn(2+).

It localises to the cytoplasm. The catalysed reaction is tRNA(Cys) + L-cysteine + ATP = L-cysteinyl-tRNA(Cys) + AMP + diphosphate. In Aromatoleum aromaticum (strain DSM 19018 / LMG 30748 / EbN1) (Azoarcus sp. (strain EbN1)), this protein is Cysteine--tRNA ligase.